A 505-amino-acid polypeptide reads, in one-letter code: Lysine--tRNA ligase (505 aa).

Mg(2+) contacts are provided by glutamate 409 and glutamate 416.

Belongs to the class-II aminoacyl-tRNA synthetase family. As to quaternary structure, homodimer. Mg(2+) is required as a cofactor.

It is found in the cytoplasm. The enzyme catalyses tRNA(Lys) + L-lysine + ATP = L-lysyl-tRNA(Lys) + AMP + diphosphate. This is Lysine--tRNA ligase from Latilactobacillus sakei subsp. sakei (strain 23K) (Lactobacillus sakei subsp. sakei).